A 321-amino-acid chain; its full sequence is Tetraacyldisaccharide 4'-kinase (321 aa).

54 to 61 (SVGGTGKT) is a binding site for ATP.

It belongs to the LpxK family.

The enzyme catalyses a lipid A disaccharide + ATP = a lipid IVA + ADP + H(+). It functions in the pathway glycolipid biosynthesis; lipid IV(A) biosynthesis; lipid IV(A) from (3R)-3-hydroxytetradecanoyl-[acyl-carrier-protein] and UDP-N-acetyl-alpha-D-glucosamine: step 6/6. Functionally, transfers the gamma-phosphate of ATP to the 4'-position of a tetraacyldisaccharide 1-phosphate intermediate (termed DS-1-P) to form tetraacyldisaccharide 1,4'-bis-phosphate (lipid IVA). In Rickettsia bellii (strain OSU 85-389), this protein is Tetraacyldisaccharide 4'-kinase.